The chain runs to 212 residues: Putative 3-methyladenine DNA glycosylase (212 aa).

The protein belongs to the DNA glycosylase MPG family.

In Psychrobacter cryohalolentis (strain ATCC BAA-1226 / DSM 17306 / VKM B-2378 / K5), this protein is Putative 3-methyladenine DNA glycosylase.